The sequence spans 506 residues: Hexokinase-6 (506 aa).

The helical transmembrane segment at 6 to 26 (VVGTAVVVCAAAAAAVGVAVV) threads the bilayer. One can recognise a Hexokinase domain in the interval 43 to 497 (RRAAAVIEEV…SGIGAALLAA (455 aa)). The hexokinase small subdomain stretch occupies residues 98–236 (TGDEHGLFYA…GLDMKVTALV (139 aa)). 3 residues coordinate ADP: Gly-112, Thr-113, and Asn-114. 4 residues coordinate D-glucose: Thr-202, Lys-203, Asn-237, and Asp-238. The hexokinase large subdomain stretch occupies residues 237–486 (NDTVGTLAGG…SSVVVKLAND (250 aa)). Thr-261 is an ADP binding site. Residues Asn-264, Glu-292, and Glu-323 each contribute to the D-glucose site. Gly-451 is a binding site for ADP.

This sequence belongs to the hexokinase family. Expressed in roots, leaves, flowers, immature seeds and endosperm.

It localises to the plastid. The protein localises to the chloroplast outer membrane. It catalyses the reaction a D-hexose + ATP = a D-hexose 6-phosphate + ADP + H(+). It carries out the reaction D-fructose + ATP = D-fructose 6-phosphate + ADP + H(+). The catalysed reaction is D-glucose + ATP = D-glucose 6-phosphate + ADP + H(+). It participates in carbohydrate metabolism; hexose metabolism. Its pathway is carbohydrate degradation; glycolysis; D-glyceraldehyde 3-phosphate and glycerone phosphate from D-glucose: step 1/4. Functionally, fructose and glucose phosphorylating enzyme. Functions as a glucose sensor for plant growth and photosynthesis. This Oryza sativa subsp. japonica (Rice) protein is Hexokinase-6 (HXK6).